A 225-amino-acid polypeptide reads, in one-letter code: Elongation factor 1-beta (225 aa).

Positions 2–84 (GFGDLKSPAG…ALGKYGPADV (83 aa)) constitute a GST C-terminal domain. Position 7 is an N6-acetyllysine (lysine 7). Residues serine 8 and serine 42 each carry the phosphoserine modification. Positions 78–115 (KYGPADVEDTTGSGATDSKDDDDIDLFGSDDEEESEEA) are disordered. Threonine 88 and threonine 93 each carry phosphothreonine. Serine 95 and serine 106 each carry phosphoserine. Residues 96 to 113 (KDDDDIDLFGSDDEEESE) are compositionally biased toward acidic residues. Lysine 147 is covalently cross-linked (Glycyl lysine isopeptide (Lys-Gly) (interchain with G-Cter in SUMO2)). The residue at position 174 (serine 174) is a Phosphoserine.

Belongs to the EF-1-beta/EF-1-delta family. As to quaternary structure, EF-1 is composed of 4 subunits: alpha, beta (alpha subunit of the eEF1B subcomplex), delta (beta subunit of the eEF1B subcomplex), and gamma (gamma subunit of the eEF1B subcomplex). Interacts with elongation factor EEF1A1. Phosphorylation affects the GDP/GTP exchange rate.

Its function is as follows. Catalytic subunit of the guanine nucleotide exchange factor (GEF) (eEF1B subcomplex) of the eukaryotic elongation factor 1 complex (eEF1). Stimulates the exchange of GDP for GTP on elongation factor 1A (eEF1A), probably by displacing GDP from the nucleotide binding pocket in eEF1A. This is Elongation factor 1-beta (EEF1B2) from Homo sapiens (Human).